The primary structure comprises 367 residues: NAD(P)H-quinone oxidoreductase subunit 1, chloroplastic (367 aa).

7 helical membrane passes run 30–50 (LFPILTLVLGITIGVLVIVWL), 98–118 (FSIGPSIAVISIFLSYSVIPF), 127–147 (LSIGVFFWIAISSIAPVGLLM), 164–184 (AAAQSISYEIPLALCVLSISL), 273–293 (LFVTVLYLGGWNLSIPYIFVP), 304–324 (VFGTLIGIFITLAKTYLFLFI), and 340–360 (LLNLGWKFLLPISLGNLLLTT).

The protein belongs to the complex I subunit 1 family. In terms of assembly, NDH is composed of at least 16 different subunits, 5 of which are encoded in the nucleus.

The protein localises to the plastid. It localises to the chloroplast thylakoid membrane. The enzyme catalyses a plastoquinone + NADH + (n+1) H(+)(in) = a plastoquinol + NAD(+) + n H(+)(out). It catalyses the reaction a plastoquinone + NADPH + (n+1) H(+)(in) = a plastoquinol + NADP(+) + n H(+)(out). In terms of biological role, NDH shuttles electrons from NAD(P)H:plastoquinone, via FMN and iron-sulfur (Fe-S) centers, to quinones in the photosynthetic chain and possibly in a chloroplast respiratory chain. The immediate electron acceptor for the enzyme in this species is believed to be plastoquinone. Couples the redox reaction to proton translocation, and thus conserves the redox energy in a proton gradient. The chain is NAD(P)H-quinone oxidoreductase subunit 1, chloroplastic from Nicotiana tabacum (Common tobacco).